Consider the following 191-residue polypeptide: Decorin-binding protein A (191 aa).

The signal sequence occupies residues 1 to 29; the sequence is MIKCNNKTFNNLLKLTILVNLLISCGLTG.

It belongs to the decorin-binding protein family.

In terms of biological role, binds to decorin which may mediate the adherence of B.burgdorferi to collagen fibers in skin and other tissues. This is Decorin-binding protein A (dbpA) from Borreliella burgdorferi (strain ATCC 35210 / DSM 4680 / CIP 102532 / B31) (Borrelia burgdorferi).